Reading from the N-terminus, the 234-residue chain is tRNA (guanine-N(1)-)-methyltransferase (234 aa).

Residues glycine 115 and 135 to 140 contribute to the S-adenosyl-L-methionine site; that span reads VGDYIL.

It belongs to the RNA methyltransferase TrmD family. As to quaternary structure, homodimer.

The protein localises to the cytoplasm. The enzyme catalyses guanosine(37) in tRNA + S-adenosyl-L-methionine = N(1)-methylguanosine(37) in tRNA + S-adenosyl-L-homocysteine + H(+). In terms of biological role, specifically methylates guanosine-37 in various tRNAs. This chain is tRNA (guanine-N(1)-)-methyltransferase, found in Rickettsia rickettsii (strain Iowa).